Here is a 157-residue protein sequence, read N- to C-terminus: uncharacterized protein (157 aa).

This sequence belongs to the mimivirus L242/L243 family.

This is an uncharacterized protein from Acanthamoeba polyphaga (Amoeba).